Here is an 809-residue protein sequence, read N- to C-terminus: Ecotropic viral integration site 5 protein (809 aa).

Residues 1–483 form an interaction with alpha-tubulin, gamma-tubulin, BIRC5 and FBXO5 region; it reads MVTTKMTAAF…EAESQCALKE (483 aa). Disordered stretches follow at residues 49–80 and 99–123; these read VASP…KLSP and DSKS…SSSA. Low complexity predominate over residues 51-78; that stretch reads SPSASLHTTSSSTTLSTPTQSPSSPSKL. 2 positions are modified to phosphoserine: Ser-102 and Ser-113. Positions 103–123 are enriched in low complexity; it reads LRSVNGSRRNSGSSLVSSSSA. The interval 128 to 693 is dimerization; that stretch reads SHLEEDSWIL…LNRSDSNQYI (566 aa). Residues 163-348 form the Rab-GAP TBC domain; that stretch reads GIPHHFRAIV…RIFDIFMSEG (186 aa). Residues 377-809 are targeting to the centrosomes; it reads QHFQKVIPHQ…PQRESYSTTV (433 aa). Positions 406 to 717 form a coiled coil; the sequence is KKMKKLEKEY…RCLKGQRDFS (312 aa). The interaction with AURKB and INCENP stretch occupies residues 487-809; it reads KVLDIEKKNN…PQRESYSTTV (323 aa). Phosphoserine is present on residues Ser-497, Ser-689, Ser-776, and Ser-778. The segment at 760 to 809 is disordered; sequence HRKSGPMSLNPALADGSESEAEDGMLGPQESDPEAPQKQPPQRESYSTTV. Residues 799–809 show a composition bias toward polar residues; that stretch reads PPQRESYSTTV.

In terms of assembly, dimeric and monomeric. Interacts with alpha- and gamma-tubulin. Interacts with FBXO5. Interacts with the chromosome passenger complex (CPC) which is at least composed of AURKB/aurora-B, BIRC5/survivin, CDCA8/borealin and INCENP. Post-translationally, probably phosphorylated by PLK1; may be required for degradation during mitosis. In terms of processing, ubiquitinated. Degradation during prophase is ubiquitin-dependent. As to expression, widely expressed.

It is found in the nucleus. The protein resides in the cytoplasm. The protein localises to the cytoskeleton. It localises to the microtubule organizing center. Its subcellular location is the centrosome. It is found in the spindle. Its function is as follows. Functions as a regulator of cell cycle progression by stabilizing the FBXO5 protein and promoting cyclin-A accumulation during interphase. May play a role in cytokinesis. The sequence is that of Ecotropic viral integration site 5 protein (Evi5) from Mus musculus (Mouse).